Here is a 276-residue protein sequence, read N- to C-terminus: Ribosomal RNA small subunit methyltransferase A (276 aa).

Residues Asn19, Leu21, Gly46, Glu71, Asp94, and Asn117 each contribute to the S-adenosyl-L-methionine site.

This sequence belongs to the class I-like SAM-binding methyltransferase superfamily. rRNA adenine N(6)-methyltransferase family. RsmA subfamily.

Its subcellular location is the cytoplasm. It carries out the reaction adenosine(1518)/adenosine(1519) in 16S rRNA + 4 S-adenosyl-L-methionine = N(6)-dimethyladenosine(1518)/N(6)-dimethyladenosine(1519) in 16S rRNA + 4 S-adenosyl-L-homocysteine + 4 H(+). Its function is as follows. Specifically dimethylates two adjacent adenosines (A1518 and A1519) in the loop of a conserved hairpin near the 3'-end of 16S rRNA in the 30S particle. May play a critical role in biogenesis of 30S subunits. In Burkholderia ambifaria (strain ATCC BAA-244 / DSM 16087 / CCUG 44356 / LMG 19182 / AMMD) (Burkholderia cepacia (strain AMMD)), this protein is Ribosomal RNA small subunit methyltransferase A.